Consider the following 594-residue polypeptide: Arrestin domain-containing protein C584.15c (594 aa).

Residues 368–398 are compositionally biased toward polar residues; sequence NPQLQSGFTTPNLSRRNSSDFGPNSPVNIHS. Disordered stretches follow at residues 368–417 and 531–594; these read NPQL…NSNA and EATR…RGVR. Residues 404–417 show a composition bias toward low complexity; sequence SGQQPSSPASNSNA. A compositionally biased stretch (polar residues) spans 534-552; that stretch reads RPSSPTESVEIPSNTTTIA. Over residues 565–574 the composition is skewed to pro residues; the sequence is PSTPAPPLPS. Phosphoserine is present on S584.

Belongs to the arrestin family.

The polypeptide is Arrestin domain-containing protein C584.15c (Schizosaccharomyces pombe (strain 972 / ATCC 24843) (Fission yeast)).